A 573-amino-acid chain; its full sequence is Sulfite reductase [NADPH] hemoprotein beta-component (573 aa).

[4Fe-4S] cluster contacts are provided by Cys438, Cys444, Cys483, and Cys487. Residue Cys487 coordinates siroheme.

The protein belongs to the nitrite and sulfite reductase 4Fe-4S domain family. In terms of assembly, alpha(8)-beta(8). The alpha component is a flavoprotein, the beta component is a hemoprotein. The cofactor is siroheme. It depends on [4Fe-4S] cluster as a cofactor.

It catalyses the reaction hydrogen sulfide + 3 NADP(+) + 3 H2O = sulfite + 3 NADPH + 4 H(+). Its pathway is sulfur metabolism; hydrogen sulfide biosynthesis; hydrogen sulfide from sulfite (NADPH route): step 1/1. Its function is as follows. Component of the sulfite reductase complex that catalyzes the 6-electron reduction of sulfite to sulfide. This is one of several activities required for the biosynthesis of L-cysteine from sulfate. The chain is Sulfite reductase [NADPH] hemoprotein beta-component from Geobacillus thermodenitrificans (strain NG80-2).